The sequence spans 309 residues: Mitochondrial import receptor subunit TOM34 (309 aa).

Ser-8 is subject to Phosphoserine. TPR repeat units follow at residues 9-42 (VEQL…LQAR), 51-84 (SVLY…VPFS), and 85-118 (IKPL…DNSV). The disordered stretch occupies residues 158 to 189 (WNSLPSDNHKETAKTKSKEATATKSRVPSAGD). Position 160 is a phosphoserine (Ser-160). Positions 164 to 178 (DNHKETAKTKSKEAT) are enriched in basic and acidic residues. The residue at position 186 (Ser-186) is a Phosphoserine. TPR repeat units lie at residues 193-226 (AKAL…SSLE), 227-260 (SATY…DGKN), and 261-294 (VKAF…EPRN). Lys-197 participates in a covalent cross-link: Glycyl lysine isopeptide (Lys-Gly) (interchain with G-Cter in SUMO2).

The protein belongs to the Tom34 family. Interacts with HSP90A, VCP, ATP6V1D, KIAA0665, AMPK, and DMAP1 through its TPR repeat. Isoform 1 is ubiquitously expressed while isoform 2 is expressed only in mature testicular germ cells. Isoform 1 is expressed in all testicular cells. Isoform 2 is highly expressed in early to late pachytene cells but expression is significantly decreased in round spermatid cells.

It is found in the cytoplasm. The protein localises to the mitochondrion outer membrane. Plays a role in the import of cytosolically synthesized preproteins into mitochondria. Binds the mature portion of precursor proteins. Interacts with cellular components, and possesses weak ATPase activity. May be a chaperone-like protein that helps to keep newly synthesized precursors in an unfolded import compatible state. The polypeptide is Mitochondrial import receptor subunit TOM34 (Tomm34) (Mus musculus (Mouse)).